A 440-amino-acid polypeptide reads, in one-letter code: Elongation factor 1-alpha (440 aa).

A tr-type G domain is found at 5–228; the sequence is KPHINLVVIG…ALDTYIQPPK (224 aa). The segment at 14 to 21 is G1; it reads GHVDHGKS. 14–21 provides a ligand contact to GTP; it reads GHVDHGKS. S21 is a Mg(2+) binding site. The segment at 70 to 74 is G2; it reads GVTID. Residues 91–94 are G3; that stretch reads DAPG. Residues 91-95 and 153-156 each bind GTP; these read DAPGH and NKMD. Positions 153 to 156 are G4; sequence NKMD. Residues 194–196 are G5; the sequence is SAW.

Belongs to the TRAFAC class translation factor GTPase superfamily. Classic translation factor GTPase family. EF-Tu/EF-1A subfamily.

It is found in the cytoplasm. The catalysed reaction is GTP + H2O = GDP + phosphate + H(+). Its function is as follows. GTP hydrolase that promotes the GTP-dependent binding of aminoacyl-tRNA to the A-site of ribosomes during protein biosynthesis. The protein is Elongation factor 1-alpha of Hyperthermus butylicus (strain DSM 5456 / JCM 9403 / PLM1-5).